Here is a 127-residue protein sequence, read N- to C-terminus: Anti-adapter protein IraD (127 aa).

This sequence belongs to the GpW/Gp25 family. IraD subfamily. Interacts with RssB.

It localises to the cytoplasm. In terms of biological role, inhibits RpoS proteolysis by regulating RssB activity, thereby increasing the stability of the sigma stress factor RpoS during oxidative stress. Its effect on RpoS stability is due to its interaction with RssB, which probably blocks the interaction of RssB with RpoS, and the consequent delivery of the RssB-RpoS complex to the ClpXP protein degradation pathway. In Escherichia coli (strain SMS-3-5 / SECEC), this protein is Anti-adapter protein IraD.